We begin with the raw amino-acid sequence, 158 residues long: uncharacterized protein (158 aa).

Positions 1 to 16 (MFRPILILTILSCVLA) are cleaved as a signal peptide. N-linked (GlcNAc...) asparagine glycosylation is present at Asn-122.

This is an uncharacterized protein from Caenorhabditis elegans.